The sequence spans 618 residues: 1-deoxy-D-xylulose-5-phosphate synthase (618 aa).

Residues histidine 70 and glycine 111–serine 113 contribute to the thiamine diphosphate site. Aspartate 142 is a binding site for Mg(2+). Thiamine diphosphate contacts are provided by residues glycine 143–serine 144, asparagine 171, tyrosine 278, and glutamate 360. Asparagine 171 is a binding site for Mg(2+).

The protein belongs to the transketolase family. DXPS subfamily. As to quaternary structure, homodimer. It depends on Mg(2+) as a cofactor. Thiamine diphosphate is required as a cofactor.

It catalyses the reaction D-glyceraldehyde 3-phosphate + pyruvate + H(+) = 1-deoxy-D-xylulose 5-phosphate + CO2. It functions in the pathway metabolic intermediate biosynthesis; 1-deoxy-D-xylulose 5-phosphate biosynthesis; 1-deoxy-D-xylulose 5-phosphate from D-glyceraldehyde 3-phosphate and pyruvate: step 1/1. Catalyzes the acyloin condensation reaction between C atoms 2 and 3 of pyruvate and glyceraldehyde 3-phosphate to yield 1-deoxy-D-xylulose-5-phosphate (DXP). The sequence is that of 1-deoxy-D-xylulose-5-phosphate synthase from Helicobacter pylori (strain G27).